Here is a 303-residue protein sequence, read N- to C-terminus: MSMILFASIVRVRDGLPLSASTDFYYAQEFLECRRQLKTLAQRLARHPGRGCAESCDFLIYFSSSGDVACMAICSRQCPAAMAFCFLEALWWDFIASYDTTCVGLASRPYAFLEFDSVIQKTKWHFNHMSSSQMKSGLEKIQEELEFQPPAVLSLEDTDVANGMLNGHTPVHSEPAPNLRMKPVTALGVLSLVLNIMCAALNLIRGVHLAEHSLQVAQEEVGNILAFFIPSVACIVQCYLYLFYSPARTLKVLLMLASICLGNAYLHGLRNTWQILFHVGVAFLSSYQILTRQLQERQSDYGV.

At 1-183 (MSMILFASIV…EPAPNLRMKP (183 aa)) the chain is on the cytoplasmic side. Residues 8-119 (SIVRVRDGLP…YAFLEFDSVI (112 aa)) form the Longin domain. Residues 184–204 (VTALGVLSLVLNIMCAALNLI) traverse the membrane as a helical segment. At 205–223 (RGVHLAEHSLQVAQEEVGN) the chain is on the lumenal side. A helical membrane pass occupies residues 224 to 244 (ILAFFIPSVACIVQCYLYLFY). Residues 245-248 (SPAR) are Cytoplasmic-facing. The chain crosses the membrane as a helical span at residues 249-269 (TLKVLLMLASICLGNAYLHGL). Position 270 (Arg-270) is a topological domain, lumenal. The helical transmembrane segment at 271 to 291 (NTWQILFHVGVAFLSSYQILT) threads the bilayer. At 292–303 (RQLQERQSDYGV) the chain is on the cytoplasmic side.

Belongs to the synaptobrevin family.

Its subcellular location is the endoplasmic reticulum membrane. Functionally, may be involved in vesicle transport between the ER and the Golgi complex. This is Vesicle-trafficking protein SEC22c (Sec22c) from Mus musculus (Mouse).